Here is a 227-residue protein sequence, read N- to C-terminus: General transcription factor 3C polypeptide 6 (227 aa).

Residues 157–227 form a disordered region; it reads DEAAGPASDK…DGNVSQNNQS (71 aa). The span at 186–195 shows a compositional bias: basic and acidic residues; it reads EQEKVEHSEV. Residues 203–227 are compositionally biased toward polar residues; it reads ETPSEMESSVFMGTQDGNVSQNNQS.

The protein belongs to the TFIIIC subunit 6 family. In terms of assembly, part of the TFIIIC subcomplex TFIIIC2, consisting of six subunits, GTF3C1, GTF3C2, GTF3C3, GTF3C4, GTF3C5 and GTF3C6. Interacts with GTF3C4 and GTF3C5.

It is found in the nucleus. Its function is as follows. Involved in RNA polymerase III-mediated transcription. Integral, tightly associated component of the DNA-binding TFIIIC2 subcomplex that directly binds tRNA and virus-associated RNA promoters. This is General transcription factor 3C polypeptide 6 from Mus musculus (Mouse).